The chain runs to 187 residues: UPF0232 protein MMAR_0004 (187 aa).

2 disordered regions span residues 1 to 77 (MSDD…QPLG) and 166 to 187 (ASPS…DTYG). Residues 14–30 (AARDELSGMDLVRRTLA) are compositionally biased toward basic and acidic residues. Over residues 31–55 (EARAAARARGQDPGRGFAAGPAPRR) the composition is skewed to low complexity.

This sequence belongs to the UPF0232 family.

In Mycobacterium marinum (strain ATCC BAA-535 / M), this protein is UPF0232 protein MMAR_0004.